A 361-amino-acid polypeptide reads, in one-letter code: UDP-N-acetylglucosamine--N-acetylmuramyl-(pentapeptide) pyrophosphoryl-undecaprenol N-acetylglucosamine transferase (361 aa).

Residues 11–13, Asn124, Arg162, Ser193, and Gln292 each bind UDP-N-acetyl-alpha-D-glucosamine; that span reads TGG.

It belongs to the glycosyltransferase 28 family. MurG subfamily.

The protein localises to the cell inner membrane. It carries out the reaction di-trans,octa-cis-undecaprenyl diphospho-N-acetyl-alpha-D-muramoyl-L-alanyl-D-glutamyl-meso-2,6-diaminopimeloyl-D-alanyl-D-alanine + UDP-N-acetyl-alpha-D-glucosamine = di-trans,octa-cis-undecaprenyl diphospho-[N-acetyl-alpha-D-glucosaminyl-(1-&gt;4)]-N-acetyl-alpha-D-muramoyl-L-alanyl-D-glutamyl-meso-2,6-diaminopimeloyl-D-alanyl-D-alanine + UDP + H(+). Its pathway is cell wall biogenesis; peptidoglycan biosynthesis. Its function is as follows. Cell wall formation. Catalyzes the transfer of a GlcNAc subunit on undecaprenyl-pyrophosphoryl-MurNAc-pentapeptide (lipid intermediate I) to form undecaprenyl-pyrophosphoryl-MurNAc-(pentapeptide)GlcNAc (lipid intermediate II). The sequence is that of UDP-N-acetylglucosamine--N-acetylmuramyl-(pentapeptide) pyrophosphoryl-undecaprenol N-acetylglucosamine transferase from Elusimicrobium minutum (strain Pei191).